A 152-amino-acid polypeptide reads, in one-letter code: Transcriptional regulator MraZ (152 aa).

2 SpoVT-AbrB domains span residues 5–52 and 81–124; these read ATLV…PLPE and ASEC…DETT.

It belongs to the MraZ family. Forms oligomers.

The protein localises to the cytoplasm. Its subcellular location is the nucleoid. Functionally, negatively regulates its own expression and that of the subsequent genes in the proximal part of the division and cell wall (dcw) gene cluster. Acts by binding directly to DNA. May also regulate the expression of genes outside the dcw cluster. In Shigella flexneri serotype 5b (strain 8401), this protein is Transcriptional regulator MraZ.